Reading from the N-terminus, the 2060-residue chain is Fatty acid synthase subunit beta (2060 aa).

Residues 1 to 32 (MFPGDMESKASSMNGDQPSSPTPSSSTSVTIP) are disordered. The segment covering 18-32 (PSSPTPSSSTSVTIP) has biased composition (low complexity). The acetyltransferase (AT) domain stretch occupies residues 182 to 543 (VYVIFGGQGN…KAGQGVRVIH (362 aa)). The active-site For acetyltransferase activity is the serine 301. An enoyl reductase (ER) domain region spans residues 600–845 (TRLFLQPPIM…LIVATEGAPD (246 aa)). Positions 1157–1640 (DKNLNWAKAL…CTGDRLAVSM (484 aa)) are dehydratase (DH) domain. Residues 1549–1661 (FEEQEISFTA…VEVQIHKNMA (113 aa)) enclose the MaoC-like domain. Residues 1679–2043 (LVFTGQGSQK…FNEVLRLTGS (365 aa)) are malonyl/palmitoyl transferase (MT/PT) domain. Serine 1824 (for malonyltransferase activity) is an active-site residue.

This sequence belongs to the fungal fatty acid synthetase subunit beta family. In terms of assembly, [Alpha(6)beta(6)] hexamers of two multifunctional subunits (alpha and beta).

It catalyses the reaction acetyl-CoA + n malonyl-CoA + 2n NADPH + 4n H(+) = a long-chain-acyl-CoA + n CoA + n CO2 + 2n NADP(+).. The catalysed reaction is holo-[ACP] + acetyl-CoA = acetyl-[ACP] + CoA. It carries out the reaction holo-[ACP] + malonyl-CoA = malonyl-[ACP] + CoA. The enzyme catalyses a (3R)-hydroxyacyl-[ACP] = a (2E)-enoyl-[ACP] + H2O. It catalyses the reaction a 2,3-saturated acyl-[ACP] + NAD(+) = a (2E)-enoyl-[ACP] + NADH + H(+). The catalysed reaction is (9Z)-octadecenoyl-[ACP] + H2O = (9Z)-octadecenoate + holo-[ACP] + H(+). The protein operates within mycotoxin biosynthesis. Functionally, fatty acid synthase subunit beta; part of the gene cluster that mediates the biosynthesis of gramillins A and B, bicyclic lipopeptides that induce cell death in maize leaves but not in wheat leaves. The nonribosomal peptide synthetase GRA1 incorporates respectively a glutamic adic (Glu), a leucine (Leu), a serine (Ser), a hydroxyglutamine (HOGln), a 2-amino decanoic acid, and 2 cysteins (CysB and CysA). The biosynthesis of 2-amino decanoic acid incorporated in gramillins could be initiated by a fatty acid synthase composed of the alpha and beta subunits FGSG_00036 and FGSG_11656. The cytochrome P450 monooxygenase FGSG_15680 could hydroxylate the fatty acid chain. Subsequent oxidation to the ketone by the oxidoreductase FGSG_00048 and transamination by aminotransferase FGSG_00049 could form 2-amino-decanoic acid. On the other hand, FGSG_15680 could also be responsible for the HO-modified glutamine at the gamma-position. Whether hydroxylation occurs on the fully assembled product or on the Gln residue prior to assembly into the gramillins requires further proof. The thioredoxin FGSG_00043 could also be required for the disulfide-bond formation between CysA and CysB. The specific involvement of the remaining proteins from the cluster is more difficult to discern, but could have broader regulatory (FGSG_00040 and FGSG_11657) or enzymatic functions (FGSG_00044 and FGSG_00045). The final C-domain of GRA1 does not possess the expected sequence of a termination CT domain, often implicated in macrocyclization and release of a cyclopeptidein fungal NRPs; and the thioesterase FGSG_00047 may act in concert with the terminal C-domain of GRA1 to catalyze the formation of the macrocyclic anhydride and release of the products. This Gibberella zeae (strain ATCC MYA-4620 / CBS 123657 / FGSC 9075 / NRRL 31084 / PH-1) (Wheat head blight fungus) protein is Fatty acid synthase subunit beta.